A 272-amino-acid chain; its full sequence is uncharacterized protein (272 aa).

The segment at 193–250 (AFLLPNNSKGVEKSEENEDGVTDNDSSNVNSSTNESPNPTDINVCSNDDATDNTENNL) is disordered. Low complexity predominate over residues 215-233 (DNDSSNVNSSTNESPNPTD). Residues 235–248 (NVCSNDDATDNTEN) are compositionally biased toward polar residues.

It belongs to the pal1 family.

The protein resides in the cytoplasm. It localises to the nucleus. This is an uncharacterized protein from Schizosaccharomyces pombe (strain 972 / ATCC 24843) (Fission yeast).